The sequence spans 912 residues: Intercellular adhesion molecule 5 (912 aa).

The first 29 residues, 1–29 (MPGPSPGLRALLGFWVALGLGILRLSAVA), serve as a signal peptide directing secretion. At 30-826 (QEPFWADLQP…RITVRVAGPW (797 aa)) the chain is on the extracellular side. 9 Ig-like C2-type domains span residues 47-127 (GGSL…PLPP), 132-232 (GENF…RLLA), 239-324 (DSQS…LLTL), 332-395 (GKLV…NGSA), 403-481 (PRLD…VTLT), 486-561 (PALD…VAVT), 566-645 (PSFE…NPLG), 659-734 (PQMD…TVGV), and 738-819 (PVVA…RRIT). Residue Asn-53 is glycosylated (N-linked (GlcNAc...) (high mannose) asparagine). 2 cysteine pairs are disulfide-bonded: Cys-54/Cys-97 and Cys-58/Cys-101. Asn-134 carries N-linked (GlcNAc...) asparagine glycosylation. Cys-139 and Cys-195 are joined by a disulfide. 2 positions are modified to phosphothreonine: Thr-179 and Thr-181. 2 N-linked (GlcNAc...) asparagine glycosylation sites follow: Asn-192 and Asn-211. An intrachain disulfide couples Cys-246 to Cys-297. Residues Asn-311, Asn-366, and Asn-392 are each glycosylated (N-linked (GlcNAc...) asparagine). Cys-339 and Cys-378 are oxidised to a cystine. 3 disulfide bridges follow: Cys-410–Cys-465, Cys-493–Cys-546, and Cys-573–Cys-638. N-linked (GlcNAc...) asparagine glycosylation is found at Asn-576 and Asn-639. Cysteines 666 and 717 form a disulfide. The disordered stretch occupies residues 678–708 (AAGPACARGRPSPRVRCSREGAPRPARPRVS). N-linked (GlcNAc...) asparagine glycosylation is found at Asn-756, Asn-787, and Asn-788. Cys-761 and Cys-806 are joined by a disulfide. The helical transmembrane segment at 827 to 847 (LWIAVGGAVGGAVLLAAGAGL) threads the bilayer. The Cytoplasmic segment spans residues 848-912 (AFYVQSTACK…EVFAIQLTSA (65 aa)). A disordered region spans residues 880 to 902 (GGAGSGAEGGPEAEDSAESPAGG).

Belongs to the immunoglobulin superfamily. ICAM family. Post-translationally, glycosylation at Asn-53 is critical for functional folding. In terms of tissue distribution, expressed on neurons in the most rostral segment of the mammalian brain, the telencephalon.

Its subcellular location is the membrane. Its function is as follows. ICAM proteins are ligands for the leukocyte adhesion protein LFA-1 (integrin alpha-L/beta-2). The polypeptide is Intercellular adhesion molecule 5 (ICAM5) (Oryctolagus cuniculus (Rabbit)).